The following is a 209-amino-acid chain: CASP-like protein 1A1 (209 aa).

The segment at 1–26 is disordered; sequence MEEAKHNEAEEAQGIEAREAKQIEAG. Residues 1 to 49 are Cytoplasmic-facing; the sequence is MEEAKHNEAEEAQGIEAREAKQIEAGETSRSSRKLITFEPKLVINKGIS. A helical transmembrane segment spans residues 50–70; that stretch reads VLGFVLRLFAVFGTIGSALAM. The Extracellular portion of the chain corresponds to 71-95; it reads GTTHESVVSLSQLVLLKVKYSDLPT. Residues 96-116 traverse the membrane as a helical segment; that stretch reads LMFFVVANAISGGYLVLSLPV. Topologically, residues 117-130 are cytoplasmic; it reads SIFHIFSTQAKTSR. The chain crosses the membrane as a helical span at residues 131 to 151; sequence IILLVVDTVMLALVSSGASAA. At 152–183 the chain is on the extracellular side; the sequence is TATVYLAHEGNTTANWPPICQQFDGFCERISG. Asparagine 162 carries an N-linked (GlcNAc...) asparagine glycan. A helical membrane pass occupies residues 184-204; it reads SLIGSFCAVILLMLIVINSAI. Topologically, residues 205 to 209 are cytoplasmic; it reads SLSRH.

It belongs to the Casparian strip membrane proteins (CASP) family. In terms of assembly, homodimer and heterodimers. In terms of tissue distribution, expressed in the root endodermis.

It localises to the cell membrane. This Arabidopsis thaliana (Mouse-ear cress) protein is CASP-like protein 1A1.